We begin with the raw amino-acid sequence, 654 residues long: Macrolide export ATP-binding/permease protein MacB (654 aa).

The region spanning 6 to 244 (IEISALNRIF…TSASSATDAA (239 aa)) is the ABC transporter domain. 42-49 (GTSGSGKS) contacts ATP. A run of 4 helical transmembrane segments spans residues 279 to 299 (LLTM…VAIG), 534 to 554 (IAVI…LVSV), 584 to 604 (MVCL…GALF), and 617 to 637 (VTAI…FGFL).

It belongs to the ABC transporter superfamily. Macrolide exporter (TC 3.A.1.122) family. As to quaternary structure, homodimer. Part of the tripartite efflux system MacAB-TolC, which is composed of an inner membrane transporter, MacB, a periplasmic membrane fusion protein, MacA, and an outer membrane component, TolC. The complex forms a large protein conduit and can translocate molecules across both the inner and outer membranes. Interacts with MacA.

Its subcellular location is the cell inner membrane. Its function is as follows. Part of the tripartite efflux system MacAB-TolC. MacB is a non-canonical ABC transporter that contains transmembrane domains (TMD), which form a pore in the inner membrane, and an ATP-binding domain (NBD), which is responsible for energy generation. Confers resistance against macrolides. The polypeptide is Macrolide export ATP-binding/permease protein MacB (Hahella chejuensis (strain KCTC 2396)).